The following is a 575-amino-acid chain: Acyloxyacyl hydrolase (575 aa).

An N-terminal signal peptide occupies residues 1–25 (MKSPWRILVVSPLLLLPLHSSTSRA). Positions 26-34 (HDNQPGTIR) are excised as a propeptide. The Saposin B-type domain occupies 36-117 (DHYTCVGCVL…HTLEFCKQEP (82 aa)). The interval 37 to 69 (HYTCVGCVLVVSVIEQLAQVHNSTVQASMERLC) is important for enzyme activity, localization to cytoplasmic vesicles, and protein stability. Intrachain disulfides connect C40–C113, C43–C107, C69–C82, C122–C453, C159–C168, C205–C229, C248–C328, and C375–C459. N-linked (GlcNAc...) asparagine glycosylation occurs at N58. Residues 172–176 (KLAIK) form a lipopolysaccharide binding region. Ca(2+) contacts are provided by D183, D185, D187, Y189, D204, N206, D207, D209, V212, D222, D226, N228, N230, I232, and E244. Residue N206 is glycosylated (N-linked (GlcNAc...) asparagine). The active site involves S262. An N-linked (GlcNAc...) asparagine glycan is attached at N466.

Heterodimer of the large and small subunits; disulfide-linked. Requires Ca(2+) as cofactor. Post-translationally, cleaved into a large and a small subunit. In terms of processing, the small subunit is N-glycosylated.

It localises to the secreted. It is found in the cytoplasmic vesicle. The enzyme catalyses a 3-(acyloxy)acyl derivative of bacterial toxin + H2O = a 3-hydroxyacyl derivative of bacterial toxin + a fatty acid + H(+). Removes the secondary (acyloxyacyl-linked) fatty acyl chains from the lipid A region of bacterial lipopolysaccharides (LPS). By breaking down LPS, terminates the host response to bacterial infection and prevents prolonged and damaging inflammatory responses. In peritoneal macrophages, seems to be important for recovery from a state of immune tolerance following infection by Gram-negative bacteria. The protein is Acyloxyacyl hydrolase of Oryctolagus cuniculus (Rabbit).